We begin with the raw amino-acid sequence, 96 residues long: Iron-sulfur cluster assembly protein CyaY (96 aa).

It belongs to the frataxin family.

Its function is as follows. Involved in iron-sulfur (Fe-S) cluster assembly. May act as a regulator of Fe-S biogenesis. The sequence is that of Iron-sulfur cluster assembly protein CyaY from Rickettsia bellii (strain RML369-C).